The primary structure comprises 253 residues: Triosephosphate isomerase (253 aa).

Position 9–11 (9–11 (NWK)) interacts with substrate. Histidine 95 functions as the Electrophile in the catalytic mechanism. Glutamate 167 acts as the Proton acceptor in catalysis. Substrate is bound by residues glycine 173, serine 213, and 234–235 (GG). Serine 213 bears the Phosphoserine mark.

This sequence belongs to the triosephosphate isomerase family. Homodimer.

The protein localises to the cytoplasm. It carries out the reaction D-glyceraldehyde 3-phosphate = dihydroxyacetone phosphate. Its pathway is carbohydrate biosynthesis; gluconeogenesis. The protein operates within carbohydrate degradation; glycolysis; D-glyceraldehyde 3-phosphate from glycerone phosphate: step 1/1. Its function is as follows. Involved in the gluconeogenesis. Catalyzes stereospecifically the conversion of dihydroxyacetone phosphate (DHAP) to D-glyceraldehyde-3-phosphate (G3P). The chain is Triosephosphate isomerase from Geobacillus kaustophilus (strain HTA426).